Consider the following 156-residue polypeptide: Small ribosomal subunit protein uS7 (156 aa).

This sequence belongs to the universal ribosomal protein uS7 family. Part of the 30S ribosomal subunit. Contacts proteins S9 and S11.

Functionally, one of the primary rRNA binding proteins, it binds directly to 16S rRNA where it nucleates assembly of the head domain of the 30S subunit. Is located at the subunit interface close to the decoding center, probably blocks exit of the E-site tRNA. This chain is Small ribosomal subunit protein uS7, found in Pseudarthrobacter chlorophenolicus (strain ATCC 700700 / DSM 12829 / CIP 107037 / JCM 12360 / KCTC 9906 / NCIMB 13794 / A6) (Arthrobacter chlorophenolicus).